A 361-amino-acid polypeptide reads, in one-letter code: Mitochondrial import receptor subunit TOM40 homolog (361 aa).

Low complexity predominate over residues 1–10 (MGNVLAASSP). The interval 1–71 (MGNVLAASSP…TASASGAAED (71 aa)) is disordered. Positions 11–36 (PAGPPPPPAPALVGLPPPPPSPPGFT) are enriched in pro residues. Low complexity-rich tracts occupy residues 37 to 52 (LPPL…STSR) and 59 to 71 (GAAT…AAED).

The protein belongs to the Tom40 family. As to quaternary structure, forms part of the preprotein translocase complex of the outer mitochondrial membrane (TOM complex) which consists of at least 7 different proteins (TOMM5, TOMM6, TOMM7, TOMM20, TOMM22, TOMM40 and TOMM70). Interacts with mitochondrial targeting sequences. Interacts with TIMM29; linking the TIM22 complex to the TOM complex. Forms a complex with BCAP31 (via C-terminus) which mediates the translocation of components of the mitochondrial membrane respiratory chain NADH dehydrogenase (Complex I) from the cytosol to the mitochondria. Interacts (via N-terminus) with CYP1A1 (via mitochondrial targeting signal); this interaction is required for CYP1A1 translocation across the mitochondrial outer membrane.

It localises to the mitochondrion outer membrane. Functionally, channel-forming protein essential for import of protein precursors into mitochondria. Plays a role in the assembly of the mitochondrial membrane respiratory chain NADH dehydrogenase (Complex I) by forming a complex with BCAP31 and mediating the translocation of Complex I components from the cytosol to the mitochondria. This Homo sapiens (Human) protein is Mitochondrial import receptor subunit TOM40 homolog (TOMM40).